A 1405-amino-acid chain; its full sequence is Xanthine dehydrogenase (1405 aa).

Positions 17–104 (NKLTFYVNGV…GKHLITVEGI (88 aa)) constitute a 2Fe-2S ferredoxin-type domain. 8 residues coordinate [2Fe-2S] cluster: Cys-56, Cys-61, Cys-64, Cys-86, Cys-125, Cys-128, Cys-161, and Cys-163. Positions 288-474 (FGNEQKVWFR…TKIFVPETVP (187 aa)) constitute an FAD-binding PCMH-type domain. FAD contacts are provided by residues 316-323 (IVGGASEI), Phe-397, 407-411 (TPAGN), Asp-420, Ile-464, and Lys-483. Gln-833 and Phe-864 together coordinate Mo-molybdopterin. Residues Glu-868 and Arg-946 each coordinate substrate. Arg-978 provides a ligand contact to Mo-molybdopterin. Substrate is bound at residue Phe-980. Ala-1147 is a Mo-molybdopterin binding site. Residue Glu-1333 is the Proton acceptor of the active site.

This sequence belongs to the xanthine dehydrogenase family. Homodimer. Mo-molybdopterin is required as a cofactor. It depends on [2Fe-2S] cluster as a cofactor. FAD serves as cofactor.

The protein resides in the cytoplasm. The enzyme catalyses hypoxanthine + NAD(+) + H2O = xanthine + NADH + H(+). The catalysed reaction is xanthine + NAD(+) + H2O = urate + NADH + H(+). The protein operates within purine metabolism. With respect to regulation, completely inhibited by allopurinol and significantly inhibited by adenine. Inhibited by Fe(2+), Cd(2+) and Zn(2+) and strongly inhibited by Cu(2+). Mg(2+) and Mo(2+) have no effect on activity. Key enzyme in purine degradation. Catalyzes the oxidation of hypoxanthine to xanthine. Catalyzes the oxidation of xanthine to uric acid. Oxidizes xanthine, hypoxanthine and pterine at high rates. Can also act on purine and guanine. In Blastobotrys adeninivorans (Yeast), this protein is Xanthine dehydrogenase.